The primary structure comprises 69 residues: Large ribosomal subunit protein uL29 (69 aa).

It belongs to the universal ribosomal protein uL29 family.

This chain is Large ribosomal subunit protein uL29, found in Staphylococcus haemolyticus (strain JCSC1435).